We begin with the raw amino-acid sequence, 210 residues long: Thiamine-phosphate synthase (210 aa).

4-amino-2-methyl-5-(diphosphooxymethyl)pyrimidine contacts are provided by residues 34 to 38 (QLRHK) and asparagine 66. Mg(2+) is bound by residues aspartate 67 and aspartate 86. Position 105 (serine 105) interacts with 4-amino-2-methyl-5-(diphosphooxymethyl)pyrimidine. 131 to 133 (TSS) lines the 2-[(2R,5Z)-2-carboxy-4-methylthiazol-5(2H)-ylidene]ethyl phosphate pocket. Lysine 134 provides a ligand contact to 4-amino-2-methyl-5-(diphosphooxymethyl)pyrimidine. Glycine 162 serves as a coordination point for 2-[(2R,5Z)-2-carboxy-4-methylthiazol-5(2H)-ylidene]ethyl phosphate.

The protein belongs to the thiamine-phosphate synthase family. It depends on Mg(2+) as a cofactor.

It carries out the reaction 2-[(2R,5Z)-2-carboxy-4-methylthiazol-5(2H)-ylidene]ethyl phosphate + 4-amino-2-methyl-5-(diphosphooxymethyl)pyrimidine + 2 H(+) = thiamine phosphate + CO2 + diphosphate. The catalysed reaction is 2-(2-carboxy-4-methylthiazol-5-yl)ethyl phosphate + 4-amino-2-methyl-5-(diphosphooxymethyl)pyrimidine + 2 H(+) = thiamine phosphate + CO2 + diphosphate. The enzyme catalyses 4-methyl-5-(2-phosphooxyethyl)-thiazole + 4-amino-2-methyl-5-(diphosphooxymethyl)pyrimidine + H(+) = thiamine phosphate + diphosphate. Its pathway is cofactor biosynthesis; thiamine diphosphate biosynthesis; thiamine phosphate from 4-amino-2-methyl-5-diphosphomethylpyrimidine and 4-methyl-5-(2-phosphoethyl)-thiazole: step 1/1. Functionally, condenses 4-methyl-5-(beta-hydroxyethyl)thiazole monophosphate (THZ-P) and 2-methyl-4-amino-5-hydroxymethyl pyrimidine pyrophosphate (HMP-PP) to form thiamine monophosphate (TMP). The polypeptide is Thiamine-phosphate synthase (Chlorobium limicola (strain DSM 245 / NBRC 103803 / 6330)).